We begin with the raw amino-acid sequence, 80 residues long: Small ribosomal subunit protein bS18 (80 aa).

It belongs to the bacterial ribosomal protein bS18 family. As to quaternary structure, part of the 30S ribosomal subunit. Forms a tight heterodimer with protein bS6.

In terms of biological role, binds as a heterodimer with protein bS6 to the central domain of the 16S rRNA, where it helps stabilize the platform of the 30S subunit. In Staphylococcus epidermidis (strain ATCC 35984 / DSM 28319 / BCRC 17069 / CCUG 31568 / BM 3577 / RP62A), this protein is Small ribosomal subunit protein bS18.